Consider the following 70-residue polypeptide: Beta-defensin 107A (70 aa).

The first 26 residues, 1–26 (MPGAMKIFFFIFAALILLAQIFQART), serve as a signal peptide directing secretion. Disulfide bonds link cysteine 41–cysteine 55 and cysteine 45–cysteine 64.

This sequence belongs to the beta-defensin family.

The protein localises to the secreted. In terms of biological role, has antibacterial activity. The sequence is that of Beta-defensin 107A (DEFB107A) from Pan troglodytes (Chimpanzee).